The following is a 178-amino-acid chain: Large ribosomal subunit protein uL5 (178 aa).

This sequence belongs to the universal ribosomal protein uL5 family. In terms of assembly, part of the 50S ribosomal subunit; contacts the 5S rRNA and probably tRNA. Forms a bridge to the 30S subunit in the 70S ribosome.

This is one of the proteins that bind and probably mediate the attachment of the 5S RNA into the large ribosomal subunit, where it forms part of the central protuberance. In the 70S ribosome it contacts protein S13 of the 30S subunit (bridge B1b), connecting the 2 subunits; this bridge is implicated in subunit movement. May contact the P site tRNA; the 5S rRNA and some of its associated proteins might help stabilize positioning of ribosome-bound tRNAs. The protein is Large ribosomal subunit protein uL5 of Archaeoglobus fulgidus (strain ATCC 49558 / DSM 4304 / JCM 9628 / NBRC 100126 / VC-16).